A 319-amino-acid polypeptide reads, in one-letter code: Ribosomal RNA small subunit methyltransferase H (319 aa).

Residues 38-40 (GGH), Asp58, Phe82, Asp104, and Gln111 contribute to the S-adenosyl-L-methionine site.

Belongs to the methyltransferase superfamily. RsmH family.

Its subcellular location is the cytoplasm. The catalysed reaction is cytidine(1402) in 16S rRNA + S-adenosyl-L-methionine = N(4)-methylcytidine(1402) in 16S rRNA + S-adenosyl-L-homocysteine + H(+). Specifically methylates the N4 position of cytidine in position 1402 (C1402) of 16S rRNA. This is Ribosomal RNA small subunit methyltransferase H from Histophilus somni (strain 129Pt) (Haemophilus somnus).